The primary structure comprises 244 residues: 1-(5-phosphoribosyl)-5-[(5-phosphoribosylamino)methylideneamino] imidazole-4-carboxamide isomerase (244 aa).

Aspartate 8 functions as the Proton acceptor in the catalytic mechanism. The active-site Proton donor is the aspartate 129.

The protein belongs to the HisA/HisF family.

The protein resides in the cytoplasm. It catalyses the reaction 1-(5-phospho-beta-D-ribosyl)-5-[(5-phospho-beta-D-ribosylamino)methylideneamino]imidazole-4-carboxamide = 5-[(5-phospho-1-deoxy-D-ribulos-1-ylimino)methylamino]-1-(5-phospho-beta-D-ribosyl)imidazole-4-carboxamide. It functions in the pathway amino-acid biosynthesis; L-histidine biosynthesis; L-histidine from 5-phospho-alpha-D-ribose 1-diphosphate: step 4/9. The chain is 1-(5-phosphoribosyl)-5-[(5-phosphoribosylamino)methylideneamino] imidazole-4-carboxamide isomerase from Allorhizobium ampelinum (strain ATCC BAA-846 / DSM 112012 / S4) (Agrobacterium vitis (strain S4)).